Consider the following 312-residue polypeptide: HPr kinase/phosphorylase (312 aa).

Residues His-139 and Lys-160 contribute to the active site. ATP is bound at residue 154-161; the sequence is GSSGVGKS. Ser-161 contributes to the Mg(2+) binding site. The active-site Proton acceptor; for phosphorylation activity. Proton donor; for dephosphorylation activity is Asp-178. Positions 202–211 are important for the catalytic mechanism of both phosphorylation and dephosphorylation; that stretch reads LEIRGLGIIN. Residue Glu-203 participates in Mg(2+) binding. Arg-244 is a catalytic residue. The tract at residues 265–270 is important for the catalytic mechanism of dephosphorylation; it reads PVRPGR.

This sequence belongs to the HPrK/P family. In terms of assembly, homohexamer. Requires Mg(2+) as cofactor.

The catalysed reaction is [HPr protein]-L-serine + ATP = [HPr protein]-O-phospho-L-serine + ADP + H(+). It carries out the reaction [HPr protein]-O-phospho-L-serine + phosphate + H(+) = [HPr protein]-L-serine + diphosphate. In terms of biological role, catalyzes the ATP- as well as the pyrophosphate-dependent phosphorylation of a specific serine residue in HPr, a phosphocarrier protein of the phosphoenolpyruvate-dependent sugar phosphotransferase system (PTS). HprK/P also catalyzes the pyrophosphate-producing, inorganic phosphate-dependent dephosphorylation (phosphorolysis) of seryl-phosphorylated HPr (P-Ser-HPr). The two antagonistic activities of HprK/P are regulated by several intracellular metabolites, which change their concentration in response to the absence or presence of rapidly metabolisable carbon sources (glucose, fructose, etc.) in the growth medium. Therefore, by controlling the phosphorylation state of HPr, HPrK/P is a sensor enzyme that plays a major role in the regulation of carbon metabolism and sugar transport: it mediates carbon catabolite repression (CCR), and regulates PTS-catalyzed carbohydrate uptake and inducer exclusion. This is HPr kinase/phosphorylase from Listeria welshimeri serovar 6b (strain ATCC 35897 / DSM 20650 / CCUG 15529 / CIP 8149 / NCTC 11857 / SLCC 5334 / V8).